The primary structure comprises 110 residues: Insulin (110 aa).

Positions M1 to A24 are cleaved as a signal peptide. 3 disulfide bridges follow: C31–C96, C43–C109, and C95–C100. Residues E57 to Q87 constitute a propeptide, c peptide.

This sequence belongs to the insulin family. Heterodimer of a B chain and an A chain linked by two disulfide bonds.

Its subcellular location is the secreted. Insulin decreases blood glucose concentration. It increases cell permeability to monosaccharides, amino acids and fatty acids. It accelerates glycolysis, the pentose phosphate cycle, and glycogen synthesis in liver. The sequence is that of Insulin (INS) from Ictidomys tridecemlineatus (Thirteen-lined ground squirrel).